The primary structure comprises 91 residues: Large ribosomal subunit protein bL31B-1 (91 aa).

The protein belongs to the bacterial ribosomal protein bL31 family. Type B subfamily. In terms of assembly, part of the 50S ribosomal subunit.

The polypeptide is Large ribosomal subunit protein bL31B-1 (Streptomyces avermitilis (strain ATCC 31267 / DSM 46492 / JCM 5070 / NBRC 14893 / NCIMB 12804 / NRRL 8165 / MA-4680)).